We begin with the raw amino-acid sequence, 231 residues long: Probable transaldolase (231 aa).

The active-site Schiff-base intermediate with substrate is the Lys83.

The protein belongs to the transaldolase family. Type 3B subfamily.

Its subcellular location is the cytoplasm. It carries out the reaction D-sedoheptulose 7-phosphate + D-glyceraldehyde 3-phosphate = D-erythrose 4-phosphate + beta-D-fructose 6-phosphate. The protein operates within carbohydrate degradation; pentose phosphate pathway; D-glyceraldehyde 3-phosphate and beta-D-fructose 6-phosphate from D-ribose 5-phosphate and D-xylulose 5-phosphate (non-oxidative stage): step 2/3. Its function is as follows. Transaldolase is important for the balance of metabolites in the pentose-phosphate pathway. This chain is Probable transaldolase, found in Rhodospirillum centenum (strain ATCC 51521 / SW).